We begin with the raw amino-acid sequence, 432 residues long: Bifunctional protein GlmU (432 aa).

Residues M1–K223 are pyrophosphorylase. UDP-N-acetyl-alpha-D-glucosamine is bound by residues L9 to G12, K23, Q75, and G82 to T83. D103 contributes to the Mg(2+) binding site. Positions 135, 149, 164, and 221 each coordinate UDP-N-acetyl-alpha-D-glucosamine. Mg(2+) is bound at residue N221. A linker region spans residues V224–A244. An N-acetyltransferase region spans residues G245–K432. Residues R308 and K325 each contribute to the UDP-N-acetyl-alpha-D-glucosamine site. H336 acts as the Proton acceptor in catalysis. UDP-N-acetyl-alpha-D-glucosamine-binding residues include Y339 and N350. Acetyl-CoA is bound by residues N359–Y360, S378, A396, and R413.

It in the N-terminal section; belongs to the N-acetylglucosamine-1-phosphate uridyltransferase family. This sequence in the C-terminal section; belongs to the transferase hexapeptide repeat family. In terms of assembly, homotrimer. Requires Mg(2+) as cofactor.

Its subcellular location is the cytoplasm. It catalyses the reaction alpha-D-glucosamine 1-phosphate + acetyl-CoA = N-acetyl-alpha-D-glucosamine 1-phosphate + CoA + H(+). The enzyme catalyses N-acetyl-alpha-D-glucosamine 1-phosphate + UTP + H(+) = UDP-N-acetyl-alpha-D-glucosamine + diphosphate. The protein operates within nucleotide-sugar biosynthesis; UDP-N-acetyl-alpha-D-glucosamine biosynthesis; N-acetyl-alpha-D-glucosamine 1-phosphate from alpha-D-glucosamine 6-phosphate (route II): step 2/2. It functions in the pathway nucleotide-sugar biosynthesis; UDP-N-acetyl-alpha-D-glucosamine biosynthesis; UDP-N-acetyl-alpha-D-glucosamine from N-acetyl-alpha-D-glucosamine 1-phosphate: step 1/1. It participates in bacterial outer membrane biogenesis; LPS lipid A biosynthesis. In terms of biological role, catalyzes the last two sequential reactions in the de novo biosynthetic pathway for UDP-N-acetylglucosamine (UDP-GlcNAc). The C-terminal domain catalyzes the transfer of acetyl group from acetyl coenzyme A to glucosamine-1-phosphate (GlcN-1-P) to produce N-acetylglucosamine-1-phosphate (GlcNAc-1-P), which is converted into UDP-GlcNAc by the transfer of uridine 5-monophosphate (from uridine 5-triphosphate), a reaction catalyzed by the N-terminal domain. The polypeptide is Bifunctional protein GlmU (Aliarcobacter butzleri (strain RM4018) (Arcobacter butzleri)).